The following is a 316-amino-acid chain: Transaldolase A (316 aa).

The active-site Schiff-base intermediate with substrate is Lys131.

The protein belongs to the transaldolase family. Type 1 subfamily. As to quaternary structure, homodimer.

It localises to the cytoplasm. It carries out the reaction D-sedoheptulose 7-phosphate + D-glyceraldehyde 3-phosphate = D-erythrose 4-phosphate + beta-D-fructose 6-phosphate. It participates in carbohydrate degradation; pentose phosphate pathway; D-glyceraldehyde 3-phosphate and beta-D-fructose 6-phosphate from D-ribose 5-phosphate and D-xylulose 5-phosphate (non-oxidative stage): step 2/3. Functionally, transaldolase is important for the balance of metabolites in the pentose-phosphate pathway. The chain is Transaldolase A from Salmonella typhimurium (strain LT2 / SGSC1412 / ATCC 700720).